A 486-amino-acid polypeptide reads, in one-letter code: Zinc transporter 6 (486 aa).

Over 1–60 (MVALDVLGITDSDAPVYRQKQEADTLVLGTIHPFRKAHRSVLGKLAQEFRLVTSDRRSWK) the chain is Cytoplasmic. The helical transmembrane segment at 61-81 (ILLFGVLNVVCTGCLLMWCSS) threads the bilayer. Residues 82–91 (TNSMALTAYT) lie on the Extracellular side of the membrane. A helical membrane pass occupies residues 92–112 (YLTIFDLFSLITCLLSLWVTM). Over 113-125 (KKPSQIYSFGFQR) the chain is Cytoplasmic. Residues 126 to 146 (FEVLAVFSSTVLVQLGSLFIL) form a helical membrane-spanning segment. The Extracellular segment spans residues 147 to 161 (KESVERFVEQPEVHT). A helical membrane pass occupies residues 162–182 (GRLLVGTFVALFFNLLTLLSV). The Cytoplasmic portion of the chain corresponds to 183-227 (KNKPFVFVSEAASTSWLQEHVADLSRSLCGLIPALSSFLLPRMNP). A helical membrane pass occupies residues 228–248 (FVLINLAGAFALGITYMLIEI). Residues 249–255 (NNYNAMD) lie on the Extracellular side of the membrane. The chain crosses the membrane as a helical span at residues 256-276 (TASAVAIALMTFGTMYPMSVY). At 277-486 (SGKVLLQTTP…SGTYTGPPRP (210 aa)) the chain is on the cytoplasmic side. Residues 394 to 411 (PSRAQGSEPTPATSTPAK) show a composition bias toward low complexity. The disordered stretch occupies residues 394-425 (PSRAQGSEPTPATSTPAKPSSPPPEFSFHTPG).

This sequence belongs to the cation diffusion facilitator (CDF) transporter (TC 2.A.4) family. SLC30A subfamily. In terms of assembly, heterodimer with SLC30A5; form a functional zinc ion transmembrane transporter.

Its subcellular location is the golgi apparatus. The protein localises to the trans-Golgi network membrane. In terms of biological role, has probably no intrinsic transporter activity but together with SLC30A5 forms a functional zinc ion:proton antiporter heterodimer, mediating zinc entry into the lumen of organelles along the secretory pathway. As part of that zinc ion:proton antiporter, contributes to zinc ion homeostasis within the early secretory pathway and regulates the activation and folding of enzymes like alkaline phosphatases and enzymes involved in phosphatidylinositol glycan anchor biosynthesis. The protein is Zinc transporter 6 (slc30a6) of Danio rerio (Zebrafish).